The following is a 663-amino-acid chain: Beta-galactosidase YesZ (663 aa).

Residue Arg-106 coordinates substrate. A Zn(2+)-binding site is contributed by Cys-110. Asn-144 provides a ligand contact to substrate. Residue Glu-145 is the Proton donor of the active site. Cys-153, Cys-155, and Cys-158 together coordinate Zn(2+). The active-site Nucleophile is the Glu-296. Residue 345–348 coordinates substrate; it reads EISH.

It belongs to the glycosyl hydrolase 42 family. As to quaternary structure, homotrimer.

It catalyses the reaction Hydrolysis of terminal non-reducing beta-D-galactose residues in beta-D-galactosides.. In terms of biological role, may play a role in the degradation of rhamnogalacturonan derived from plant cell walls. The sequence is that of Beta-galactosidase YesZ (yesZ) from Bacillus subtilis (strain 168).